We begin with the raw amino-acid sequence, 240 residues long: Enolase-phosphatase E1 (240 aa).

Mg(2+) contacts are provided by Asp9 and Glu11. Substrate is bound by residues Ser129 to Ser130 and Lys168. Asp195 contacts Mg(2+).

Belongs to the HAD-like hydrolase superfamily. MasA/MtnC family. Monomer. Mg(2+) serves as cofactor.

The protein localises to the cytoplasm. It localises to the nucleus. The catalysed reaction is 5-methylsulfanyl-2,3-dioxopentyl phosphate + H2O = 1,2-dihydroxy-5-(methylsulfanyl)pent-1-en-3-one + phosphate. The protein operates within amino-acid biosynthesis; L-methionine biosynthesis via salvage pathway; L-methionine from S-methyl-5-thio-alpha-D-ribose 1-phosphate: step 3/6. It participates in amino-acid biosynthesis; L-methionine biosynthesis via salvage pathway; L-methionine from S-methyl-5-thio-alpha-D-ribose 1-phosphate: step 4/6. In terms of biological role, bifunctional enzyme that catalyzes the enolization of 2,3-diketo-5-methylthiopentyl-1-phosphate (DK-MTP-1-P) into the intermediate 2-hydroxy-3-keto-5-methylthiopentenyl-1-phosphate (HK-MTPenyl-1-P), which is then dephosphorylated to form the acireductone 1,2-dihydroxy-3-keto-5-methylthiopentene (DHK-MTPene). The protein is Enolase-phosphatase E1 of Candida tropicalis (strain ATCC MYA-3404 / T1) (Yeast).